The sequence spans 23 residues: EQCGRQAGGATCPNNLCCSQYGY.

This sequence belongs to the glycosyl hydrolase 19 family. Chitinase class I subfamily.

It carries out the reaction Random endo-hydrolysis of N-acetyl-beta-D-glucosaminide (1-&gt;4)-beta-linkages in chitin and chitodextrins.. Its function is as follows. Defense against chitin-containing fungal pathogens. The protein is Endochitinase B of Pisum sativum (Garden pea).